Consider the following 417-residue polypeptide: MLKRDMNIADYDPELWASIVEETQRQEEHIELIASENYTSPRVMQAQGSQLTNKYAEGYPGKRYYGGCEFVDKTETLAIERAKALFGAVYANVQPHSGSQANAAVYMALLKPGDTVLGMNLAHGGHLTHGSPVNFSGKLYNIVPYGIDASGKIDYVELERLALEHKPKMVLGGFSAYSGVVDWAKMREIADKVGAYLFVDMAHVAGLVAAGVYPNPVPHAHVVTSTTHKTLAGPRGGLILSAVNDEELHKKLNSAVFPGTQGGPLMHVIAGKAVAFKEAMEPEFKAYQQQVVKNSKAMVEVFLARGYKIVSGGTENHLFLVDFTDRELTGKEADAALGLANITVNKNSVPNDPRSPFVTSGIRIGSPSITRRGFKEAEAKELAGWICDVLDNRTDEAVIAATRAKVLDICKRLPVYA.

Residues Leu121 and 125–127 (GHL) contribute to the (6S)-5,6,7,8-tetrahydrofolate site. N6-(pyridoxal phosphate)lysine is present on Lys229. 355-357 (SPF) provides a ligand contact to (6S)-5,6,7,8-tetrahydrofolate.

It belongs to the SHMT family. Homodimer. Pyridoxal 5'-phosphate is required as a cofactor.

It localises to the cytoplasm. The enzyme catalyses (6R)-5,10-methylene-5,6,7,8-tetrahydrofolate + glycine + H2O = (6S)-5,6,7,8-tetrahydrofolate + L-serine. Its pathway is one-carbon metabolism; tetrahydrofolate interconversion. The protein operates within amino-acid biosynthesis; glycine biosynthesis; glycine from L-serine: step 1/1. Its function is as follows. Catalyzes the reversible interconversion of serine and glycine with tetrahydrofolate (THF) serving as the one-carbon carrier. This reaction serves as the major source of one-carbon groups required for the biosynthesis of purines, thymidylate, methionine, and other important biomolecules. Also exhibits THF-independent aldolase activity toward beta-hydroxyamino acids, producing glycine and aldehydes, via a retro-aldol mechanism. The sequence is that of Serine hydroxymethyltransferase from Tolumonas auensis (strain DSM 9187 / NBRC 110442 / TA 4).